Reading from the N-terminus, the 307-residue chain is Methionyl-tRNA formyltransferase (307 aa).

109-112 (SLLP) is a binding site for (6S)-5,6,7,8-tetrahydrofolate.

The protein belongs to the Fmt family.

The catalysed reaction is L-methionyl-tRNA(fMet) + (6R)-10-formyltetrahydrofolate = N-formyl-L-methionyl-tRNA(fMet) + (6S)-5,6,7,8-tetrahydrofolate + H(+). Its function is as follows. Attaches a formyl group to the free amino group of methionyl-tRNA(fMet). The formyl group appears to play a dual role in the initiator identity of N-formylmethionyl-tRNA by promoting its recognition by IF2 and preventing the misappropriation of this tRNA by the elongation apparatus. This Mycobacteroides abscessus (strain ATCC 19977 / DSM 44196 / CCUG 20993 / CIP 104536 / JCM 13569 / NCTC 13031 / TMC 1543 / L948) (Mycobacterium abscessus) protein is Methionyl-tRNA formyltransferase.